Here is a 1061-residue protein sequence, read N- to C-terminus: Atrial natriuretic peptide receptor 1 (1061 aa).

Positions M1–A32 are cleaved as a signal peptide. The Extracellular portion of the chain corresponds to G33–E473. Residues N34 and N45 are each glycosylated (N-linked (GlcNAc...) asparagine). Residues S85, G117, and C118 each coordinate chloride. Disulfide bonds link C92–C118 and C196–C245. N-linked (GlcNAc...) asparagine glycosylation is found at N212, N338, N379, N386, and N427. C455 and C464 are joined by a disulfide. The helical transmembrane segment at V474–Y494 threads the bilayer. Over R495–G1061 the chain is Cytoplasmic. Phosphoserine is present on residues S519 and S529. One can recognise a Protein kinase domain in the interval G528–N805. The residue at position 532 (T532) is a Phosphothreonine. Phosphoserine is present on residues S534, S538, and S542. Position 545 is a phosphothreonine (T545). The Guanylate cyclase domain occupies T876–E1006.

Belongs to the adenylyl cyclase class-4/guanylyl cyclase family. Homodimer. Phosphorylation of the protein kinase-like domain is required for full activation by ANP.

It localises to the membrane. The enzyme catalyses GTP = 3',5'-cyclic GMP + diphosphate. Functionally, receptor for the atrial natriuretic peptide NPPA/ANP and the brain natriuretic peptide NPPB/BNP which are potent vasoactive hormones playing a key role in cardiovascular homeostasis. Plays an essential role in the regulation of endothelial cell senescence and vascular aging. Upon activation by ANP or BNP, stimulates the production of cyclic guanosine monophosphate (cGMP) that promotes vascular tone and volume homeostasis by activation of protein kinase cGMP-dependent 1/PRKG1 and subsequently PRKAA1, thereby controlling blood pressure and maintaining cardiovascular homeostasis. This Homo sapiens (Human) protein is Atrial natriuretic peptide receptor 1.